The following is a 488-amino-acid chain: Inosine-5'-monophosphate dehydrogenase (488 aa).

2 CBS domains span residues 95–153 (VITN…SMKI) and 157–214 (MTKE…PNSS). NAD(+) contacts are provided by residues aspartate 251 and 301–303 (GIG). Residues glycine 303 and glycine 305 each contribute to the K(+) site. Serine 306 is an IMP binding site. K(+) is bound at residue cysteine 308. Cysteine 308 acts as the Thioimidate intermediate in catalysis. IMP-binding positions include 341 to 343 (DGG), 364 to 365 (GS), and 388 to 392 (YRGMG). The active-site Proton acceptor is the arginine 404. Glutamate 416 lines the IMP pocket. The K(+) site is built by glutamate 470, serine 471, and histidine 472.

Belongs to the IMPDH/GMPR family. In terms of assembly, homotetramer. The cofactor is K(+).

The catalysed reaction is IMP + NAD(+) + H2O = XMP + NADH + H(+). It functions in the pathway purine metabolism; XMP biosynthesis via de novo pathway; XMP from IMP: step 1/1. With respect to regulation, mycophenolic acid (MPA) is a non-competitive inhibitor that prevents formation of the closed enzyme conformation by binding to the same site as the amobile flap. In contrast, mizoribine monophosphate (MZP) is a competitive inhibitor that induces the closed conformation. MPA is a potent inhibitor of mammalian IMPDHs but a poor inhibitor of the bacterial enzymes. MZP is a more potent inhibitor of bacterial IMPDH. Catalyzes the conversion of inosine 5'-phosphate (IMP) to xanthosine 5'-phosphate (XMP), the first committed and rate-limiting step in the de novo synthesis of guanine nucleotides, and therefore plays an important role in the regulation of cell growth. The polypeptide is Inosine-5'-monophosphate dehydrogenase (Bacillus subtilis (strain 168)).